The chain runs to 185 residues: Large ribosomal subunit protein uL22 (185 aa).

The segment at 157 to 185 is disordered; that stretch reads VAAPTPDEDAPKKKQSKKKMARQKLMQRD. Residues 169-178 are compositionally biased toward basic residues; that stretch reads KKQSKKKMAR.

Belongs to the universal ribosomal protein uL22 family.

The protein is Large ribosomal subunit protein uL22 (RpL17) of Argas monolakensis (Mono lake bird tick).